Reading from the N-terminus, the 561-residue chain is MITSQGSVSFRDVTVGFTQEEWQHLDPAQRTLYRDVMLENYSHLVSVGYCIPKPEVILKLEKGEEPWILEEKFPSQSHLELINTSRNYSIMKFNEFNKGGKCFCDEKHEIIHSEEEPSEYNKNGNSFWLNEDLIWHQKIKNWEQSFEYNECGKAFPENSLFLVHKRGYTGQKTCKYTEHGKTCDMSFFITHQQTHPRENHYGNECGENIFEESILLEHQSVYPFSQKLNLTPIQRTHSINNIIEYNECGTFFSEKLVLHLQQRTHTGEKPYECHECGKTFTQKSAHTRHQRTHTGGKPYECHECGKTFYKNSDLIKHQRIHTGERPYGCHECGKSFSEKSTLTQHQRTHTGEKPYECHECGKTFSFKSVLTVHQKTHTGEKPYECYACGKAFLRKSDLIKHQRIHTGEKPYECNECGKSFSEKSTLTKHLRTHTGEKPYECIQCGKFFCYYSGFTEHLRRHTGEKPFGCNECGKTFRQKSALIVHQRTHIRQKPYGCNQCGKSFCVKSKLIAHHRTHTGEKPYECNVCGKSFYVKSKLTVHQRIHLGRNPINVVNEGNYSG.

The 72-residue stretch at 8–79 folds into the KRAB domain; it reads VSFRDVTVGF…EEKFPSQSHL (72 aa). The C2H2-type 1; degenerate zinc finger occupies 146 to 168; that stretch reads FEYNECGKAFPENSLFLVHKRGY. The C2H2-type 2; degenerate zinc finger occupies 243–265; it reads IEYNECGTFFSEKLVLHLQQRTH. 10 C2H2-type zinc fingers span residues 271-293, 299-321, 327-349, 355-377, 383-405, 411-433, 439-461, 467-489, 495-517, and 523-545; these read YECHECGKTFTQKSAHTRHQRTH, YECHECGKTFYKNSDLIKHQRIH, YGCHECGKSFSEKSTLTQHQRTH, YECHECGKTFSFKSVLTVHQKTH, YECYACGKAFLRKSDLIKHQRIH, YECNECGKSFSEKSTLTKHLRTH, YECIQCGKFFCYYSGFTEHLRRH, FGCNECGKTFRQKSALIVHQRTH, YGCNQCGKSFCVKSKLIAHHRTH, and YECNVCGKSFYVKSKLTVHQRIH.

Belongs to the krueppel C2H2-type zinc-finger protein family.

The protein localises to the nucleus. In terms of biological role, may be involved in transcriptional regulation. This is Zinc finger protein 37A (ZNF37A) from Homo sapiens (Human).